Consider the following 343-residue polypeptide: Ribosomal RNA small subunit methyltransferase C (343 aa).

It belongs to the methyltransferase superfamily. RsmC family. In terms of assembly, monomer.

It is found in the cytoplasm. The catalysed reaction is guanosine(1207) in 16S rRNA + S-adenosyl-L-methionine = N(2)-methylguanosine(1207) in 16S rRNA + S-adenosyl-L-homocysteine + H(+). Specifically methylates the guanine in position 1207 of 16S rRNA in the 30S particle. The polypeptide is Ribosomal RNA small subunit methyltransferase C (Escherichia coli O6:H1 (strain CFT073 / ATCC 700928 / UPEC)).